Reading from the N-terminus, the 1048-residue chain is PH and SEC7 domain-containing protein 3 (1048 aa).

The segment covering S36–D45 has biased composition (basic and acidic residues). Residues S36–T57 are disordered. S76 bears the Phosphoserine mark. Disordered regions lie at residues L104 to Q126, G310 to R342, S364 to R383, and Q395 to T434. The segment covering G311–D321 has biased composition (basic and acidic residues). The span at N397–G423 shows a compositional bias: basic and acidic residues. One can recognise an SEC7 domain in the interval T534–E734. Over residues D741–N758 the composition is skewed to basic and acidic residues. The interval D741 to G769 is disordered. Position 770 is a phosphoserine (S770). Residues A785–A898 form the PH domain. The stretch at A922–S952 forms a coiled coil. The disordered stretch occupies residues D999–T1048. 5 positions are modified to phosphoserine: S1009, S1011, S1012, S1014, and S1020. Polar residues predominate over residues S1011–I1022. Residues N1029–E1039 are compositionally biased toward basic and acidic residues.

As to expression, isoform 2 is expressed in epididymis (at protein level).

It is found in the cell membrane. Its subcellular location is the cell projection. The protein resides in the ruffle membrane. The protein localises to the postsynaptic density. Its function is as follows. Guanine nucleotide exchange factor for ARF6. The polypeptide is PH and SEC7 domain-containing protein 3 (PSD3) (Homo sapiens (Human)).